We begin with the raw amino-acid sequence, 479 residues long: Protein C-ets-2 (479 aa).

The PNT domain maps to 88-173 (DTFSGFTKEQ…EHLEQMIKDS (86 aa)). The ETS DNA-binding region spans 373–453 (IQLWQFLLEL…SGKRYVYRFV (81 aa)).

It belongs to the ETS family.

The protein localises to the nucleus. Probable transcription factor. The polypeptide is Protein C-ets-2 (ETS2) (Gallus gallus (Chicken)).